The chain runs to 190 residues: Selenoprotein S (190 aa).

Positions 1-13 (MEAEDGARVRNED) are enriched in basic and acidic residues. The tract at residues 1–20 (MEAEDGARVRNEDVPPQNQD) is disordered. Residues 30–50 (AFMSEYGWYLLFGCVGVYLLI) traverse the membrane as a helical segment. The span at 58-68 (SSTQTRSSSGS) shows a compositional bias: low complexity. A disordered region spans residues 58–190 (SSTQTRSSSG…RRGPSAGGUG (133 aa)). Basic and acidic residues predominate over residues 79–120 (RRQEALEASRRRMQEEQDARAAEFREKQRMLEEEKRRQKIEM). Over residues 136 to 151 (VAQQNTEEAASSSSLR) the composition is skewed to polar residues. Selenocysteine 189 is a non-standard amino acid (selenocysteine).

This sequence belongs to the selenoprotein S family.

The protein localises to the endoplasmic reticulum membrane. Its subcellular location is the cytoplasm. In terms of biological role, involved in the degradation process of misfolded endoplasmic reticulum (ER) luminal proteins. Participates in the transfer of misfolded proteins from the ER to the cytosol, where they are destroyed by the proteasome in a ubiquitin-dependent manner. This Danio rerio (Zebrafish) protein is Selenoprotein S (vimp).